Reading from the N-terminus, the 570-residue chain is Proline--tRNA ligase (570 aa).

This sequence belongs to the class-II aminoacyl-tRNA synthetase family. ProS type 1 subfamily. In terms of assembly, homodimer.

The protein resides in the cytoplasm. The enzyme catalyses tRNA(Pro) + L-proline + ATP = L-prolyl-tRNA(Pro) + AMP + diphosphate. In terms of biological role, catalyzes the attachment of proline to tRNA(Pro) in a two-step reaction: proline is first activated by ATP to form Pro-AMP and then transferred to the acceptor end of tRNA(Pro). As ProRS can inadvertently accommodate and process non-cognate amino acids such as alanine and cysteine, to avoid such errors it has two additional distinct editing activities against alanine. One activity is designated as 'pretransfer' editing and involves the tRNA(Pro)-independent hydrolysis of activated Ala-AMP. The other activity is designated 'posttransfer' editing and involves deacylation of mischarged Ala-tRNA(Pro). The misacylated Cys-tRNA(Pro) is not edited by ProRS. The sequence is that of Proline--tRNA ligase from Acidithiobacillus ferrooxidans (strain ATCC 23270 / DSM 14882 / CIP 104768 / NCIMB 8455) (Ferrobacillus ferrooxidans (strain ATCC 23270)).